The sequence spans 545 residues: uncharacterized protein (545 aa).

Composition is skewed to basic and acidic residues over residues 34 to 44 and 53 to 63; these read PMNKQNEKLKT and PRNDYSRRVSR. Disordered stretches follow at residues 34–98, 269–296, and 415–444; these read PMNK…PESN, QNGT…PQDS, and ERPQ…SAPE. The span at 69–78 shows a compositional bias: polar residues; the sequence is TDSSEQQITA. Basic and acidic residues predominate over residues 415–428; the sequence is ERPQRKTEHVKTPE. A compositionally biased stretch (polar residues) spans 429–441; the sequence is ENLQTKNPTTMTS.

This is an uncharacterized protein from Mus musculus (Mouse).